We begin with the raw amino-acid sequence, 68 residues long: Peptide Hp1090 (68 aa).

The N-terminal stretch at 1–23 (MKTQFAIFLITLVLFQMFSQSDA) is a signal peptide. Position 36 is a phenylalanine amide (Phe-36). The propeptide occupies 40 to 68 (GLSDLDDLDESFDGEVSQADIDFLKELMQ).

The protein belongs to the non-disulfide-bridged peptide (NDBP) superfamily. Short antimicrobial peptide (group 4) family. In terms of tissue distribution, expressed by the venom gland.

The protein localises to the secreted. The protein resides in the target cell membrane. Amphipathic peptide which inhibits the growth of Gram-positive bacteria. This Heterometrus petersii (Asian forest scorpion) protein is Peptide Hp1090.